An 887-amino-acid chain; its full sequence is Phosphatidylinositol 3-kinase catalytic subunit type 3 (887 aa).

The region spanning 35–184 (YKAVLEDPML…LAKLTKAHRQ (150 aa)) is the C2 PI3K-type domain. The disordered stretch occupies residues 149-170 (VEADGSEPTRTPGRTSSTLSED). Residues 156 to 170 (PTRTPGRTSSTLSED) show a composition bias toward polar residues. Phosphothreonine; by AMPK is present on Thr-163. Ser-165 is subject to Phosphoserine; by AMPK. Phosphoserine is present on residues Ser-244, Ser-261, and Ser-282. The PIK helical domain occupies 283-520 (DHDLKPNATT…PKTHEMYLNV (238 aa)). Residues 416–467 (EPTKKDSQASVSESLSSSGVSSADIDSSQIITNPLPPVASPPPASKSKEVSD) form a disordered region. Positions 423–444 (QASVSESLSSSGVSSADIDSSQ) are enriched in low complexity. Residues 449–459 (PLPPVASPPPA) show a composition bias toward pro residues. The region spanning 605–871 (IPETATLFKS…LIDESVHALF (267 aa)) is the PI3K/PI4K catalytic domain. Residues 611–617 (LFKSALM) are G-loop. A catalytic loop region spans residues 740-748 (GVGDRHLDN). Residues 759 to 780 (HIDFGYILGRDPKPLPPPMKLN) are activation loop.

The protein belongs to the PI3/PI4-kinase family. As to quaternary structure, component of the PI3K (PI3KC3/PI3K-III/class III phosphatidylinositol 3-kinase) complex the core of which is composed of the catalytic subunit PIK3C3, the regulatory subunit PIK3R4 and BECN1 associating with additional regulatory/auxiliary subunits to form alternative complex forms. Alternative complex forms containing a fourth regulatory subunit in a mutually exclusive manner are: the PI3K complex I (PI3KC3-C1) containing ATG14, and the PI3K complex II (PI3KC3-C2) containing UVRAG. PI3KC3-C1 displays a V-shaped architecture with PIK3R4 serving as a bridge between PIK3C3 and the ATG14:BECN1 subcomplex. Both, PI3KC3-C1 and PI3KC3-C2, can associate with further regulatory subunits such as RUBCN, SH3GLB1/Bif-1 and AMBRA1. PI3KC3-C1 probably associates with PIK3CB. Interacts with RAB7A in the presence of PIK3R4. Interacts with AMBRA1. Interacts with BECN1P1/BECN2. Interacts with SLAMF1. May interact with DYN2. May be a component of a complex composed of RAB5A (in GDP-bound form), DYN2 and PIK3C3. Interacts with NCKAP1L. Interacts with ATG14; this interaction is increased in the absence of TMEM39A. Interacts with STEEP1; the interaction is STING1-dependent and required for trafficking of STING1 from the endoplasmic reticulum. Interacts with YWHAG. Interacts with ARMC3. Mn(2+) is required as a cofactor. In terms of processing, ubiquitinated via 'Lys-29'- and 'Lys-48'-linked ubiquitination by UBE3C, promoting its degradation. Deubiquitination by ZRANB1/TRABID promotes its stabilization, leading to autophagosome maturation.

It localises to the midbody. Its subcellular location is the late endosome. The protein localises to the cytoplasmic vesicle. It is found in the autophagosome. The enzyme catalyses a 1,2-diacyl-sn-glycero-3-phospho-(1D-myo-inositol) + ATP = a 1,2-diacyl-sn-glycero-3-phospho-(1D-myo-inositol-3-phosphate) + ADP + H(+). Its function is as follows. Catalytic subunit of the PI3K complex that mediates formation of phosphatidylinositol 3-phosphate; different complex forms are believed to play a role in multiple membrane trafficking pathways: PI3KC3-C1 is involved in initiation of autophagosomes and PI3KC3-C2 in maturation of autophagosomes and endocytosis. As part of PI3KC3-C1, promotes endoplasmic reticulum membrane curvature formation prior to vesicle budding. Involved in regulation of degradative endocytic trafficking and required for the abscission step in cytokinesis, probably in the context of PI3KC3-C2. Involved in the transport of lysosomal enzyme precursors to lysosomes. Required for transport from early to late endosomes. This Rattus norvegicus (Rat) protein is Phosphatidylinositol 3-kinase catalytic subunit type 3.